Here is a 339-residue protein sequence, read N- to C-terminus: Probable cytosolic iron-sulfur protein assembly protein CIAO1 (339 aa).

WD repeat units follow at residues 14 to 53 (HPDS…WICK), 59 to 98 (GHQR…FECV), 103 to 142 (GHEN…EYEC), 148 to 187 (SHTQ…WVCC), 192 to 231 (GHES…NEQG), 250 to 289 (FHTR…DPQQ), and 301 to 339 (AHSQ…PAGL). The short motif at 176–178 (LYQ) is the LYR motif; required for interaction with HSC20 element.

Belongs to the WD repeat CIA1 family. In terms of assembly, component of the CIA complex. Interacts with CIAO2A and forms a complex with CIAO2B and MMS19; the interactions with CIAO2A and CIAO2B are mutually exclusive. Interacts with CHD1L, ERCC2, IREB2 and POLD1. Component of the MMXD complex, which includes CIAO1, ERCC2, CIAO2B, MMS19 and SLC25A5. Interacts with WT1. Interacts with CIAO3. Interacts (via LYR motif) with HSC20.

The protein resides in the cytoplasm. Its function is as follows. Key component of the cytosolic iron-sulfur protein assembly (CIA) complex, a multiprotein complex that mediates the incorporation of iron-sulfur cluster into extramitochondrial Fe/S proteins. As a CIA complex component, interacts specifically with CIAO2A or CIAO2B and MMS19 to assist different branches of iron-sulfur protein assembly, depending of its interactors. The complex CIAO1:CIAO2B:MMS19 binds to and facilitates the assembly of most cytosolic-nuclear Fe/S proteins. CIAO1:CIAO2A specifically matures ACO1 and stabilizes IREB2. Seems to specifically modulate the transactivation activity of WT1. As part of the mitotic spindle-associated MMXD complex it may play a role in chromosome segregation. The chain is Probable cytosolic iron-sulfur protein assembly protein CIAO1 from Mus musculus (Mouse).